The chain runs to 357 residues: MEKKVICQDIFWSCDGTSFVSVHNDFGIRQYLVPEESNTDKLNRNLLLPFTRFFRNQSIVSCAIDPFYTLYNENSDRLAGDRIVVGGKNFPLQLYSLMDGQCILSYDTMNKINGEYETVYSVKIDVESRVYTGSCRNKVAIYDKSRRDAVWMNQSTKKASKGRQSIISCFEEQPMGGQALSRGSLLCGSYANEMFQVDCRHQRLERLNYTRTVAGGIVQILTSDNGRYVYVVRRNSDAISIYDRRNLQHELNVLRLPFRIHHNSAKLKAYIDTAYGLSMGTPQGTILNWGRDLVEFGGVPSHNSVDDPLITSIPPESEWRTNLGSTIPATVVKNCPGDPELFALSHGGTISLCRFGG.

This sequence belongs to the SWT21 family. In terms of assembly, associates with snRNPs.

It localises to the nucleus. Functionally, involved in mRNA splicing. Helps to stabilize the U1 snRNP-5' splice site interaction. The protein is Protein SWT21 (SWT21) of Saccharomyces cerevisiae (strain Lalvin EC1118 / Prise de mousse) (Baker's yeast).